The primary structure comprises 297 residues: Translocase of chloroplast 33, chloroplastic (297 aa).

The AIG1-type G domain maps to 34–258 (MNSMTVLVLG…HVDKKMVDGS (225 aa)). A helical membrane pass occupies residues 37–53 (MTVLVLGKGGVGKSSTV). Residues 46–51 (GVGKSS) and 65–70 (SPFQAE) each bind GTP. Serine 50 and glutamine 68 together coordinate Mg(2+). 2 homodimerization regions span residues 65-68 (SPFQ) and 125-130 (RLDVYR). Histidine 160 serves as a coordination point for GTP. Position 181 is a phosphoserine (serine 181). 208–209 (EN) is a binding site for GTP.

It belongs to the TRAFAC class TrmE-Era-EngA-EngB-Septin-like GTPase superfamily. AIG1/Toc34/Toc159-like paraseptin GTPase family. TOC34 subfamily. In terms of assembly, homodimer, heterodimer with TOC34 and TOC159, and monomer. The homodimerization and the dimerization with TOC159 require the binding of GTP on Arg-130, and a hypothetical coGAP factor. The dimeric form has a higher GTPase activity than the monomeric form. Part of the TOC core complex that includes 1 protein for the specific recognition of transit peptides surrounded by a ring composed of four proteins forming translocation channels, and four to five GTP-binding proteins providing energy. This core complex can interact with components of the TIC complex to form a larger import complex. Chloroplastic protein precursor such as prSS (precursor of the RuBisCO small subunit) interacts with these complexes. The TOC complex contains a specific subset of polar lipids such as digalactosyldiacylglyceride (DGDG), phosphatidylcholine (PC) and phosphatidylglycerol (PG). Interacts at least with TOC75-3. Forms large complexes including TOC33, pPORA and OEP161 during pPORA import into plastids at the plastid envelope membrane. Interacts with SP1. It depends on Mg(2+) as a cofactor. Post-translationally, phosphorylated by a kinase present in the outer envelope of chloroplast. When Ser-181 is phosphorylated, the binding to preprotein, GTP and GDP is inhibited, and thus, GTPase activity is repressed. Mostly expressed in seedlings and flowers, and, to a lower extent, in roots, stems, and leaves.

It is found in the plastid. It localises to the chloroplast outer membrane. Functionally, GTPase involved in protein precursor import into chloroplasts. Seems to recognize chloroplast-destined precursor proteins and regulate their presentation to the translocation channel through GTP hydrolysis. Binds GTP, GDP, XTP, but not ATP. Probably specialized in the import of nuclear encoded photosynthetic preproteins from the cytoplasm to the chloroplast, especially during early development stages. This is Translocase of chloroplast 33, chloroplastic (TOC33) from Arabidopsis thaliana (Mouse-ear cress).